Consider the following 239-residue polypeptide: Skn-1 dependent zygotic transcript 1 protein (239 aa).

In terms of biological role, may have a role in mesendoderm development during embryogenesis. The protein is Skn-1 dependent zygotic transcript 1 protein of Caenorhabditis briggsae.